The sequence spans 324 residues: IDS-like terpene synthase 3 (324 aa).

Residues Asp-77 and Asp-81 each coordinate Mg(2+).

It belongs to the FPP/GGPP synthase family. Mg(2+) serves as cofactor.

It catalyses the reaction (2E)-geranyl diphosphate + H2O = linalool + diphosphate. The enzyme catalyses (2E,6E)-farnesyl diphosphate + H2O = (6E)-nerolidol + diphosphate. In terms of biological role, terpene synthase that shows monoterpene synthase activity and produces linalool, using geranyl diphosphate (GPP) as substrate. Also shows sesquiterpene synthase activity as it is able to convert farnesyl diphosphate (FPP) into (E)-nerolidol. The polypeptide is IDS-like terpene synthase 3 (Melampsora lini (Rust fungus)).